Consider the following 343-residue polypeptide: MAATAAYLPLRAQAQVGLAPLRPSGSAAAGARLPGRTARRRLAARGGPEAAGIRAEAVPGGGGVARRAAMVPPYNVLITGSTKGIGYALAKEFLKAGDNVVICSRSAERVESAVTDLKKEFGEQHVWGIVCDVREGKDVKALVDFARDKMKYIDIWINNAGSNAYSYKPLVETSDEALMEVITTNTLGLMICCREAINMMRNQPRGGHIFNIDGAGSDGRPTPRFAAYGATKRSVVHLTKSLQAELQMNEVNNVMVHNLSPGMVTTDLLMSGATTKQAKFFINILAEPANVVADYLVPNIRAIPTNQSMKPTYIRFLTGLKAYSRIFSRIAFGARRNKYVAED.

The transit peptide at 1 to 54 directs the protein to the chloroplast; that stretch reads MAATAAYLPLRAQAQVGLAPLRPSGSAAAGARLPGRTARRRLAARGGPEAAGIR. 78–102 contributes to the NAD(+) binding site; that stretch reads ITGSTKGIGYALAKEFLKAGDNVVI. Tyr228 (proton acceptor) is an active-site residue.

Belongs to the short-chain dehydrogenases/reductases (SDR) family. Interacts with NCY1 to form a complex that acts as a chlorophyll b reductase. As to expression, expressed in leaves and stems. Also detected in non-photosynthetic tissues such as roots.

It is found in the plastid. Its subcellular location is the chloroplast thylakoid membrane. The enzyme catalyses 7(1)-hydroxychlorophyllide a + NAD(+) = chlorophyllide b + NADH + H(+). It carries out the reaction 7(1)-hydroxychlorophyllide a + NADP(+) = chlorophyllide b + NADPH + H(+). Required for chlorophyll b degradation. The protein is Chlorophyll(ide) b reductase NOL, chloroplastic (NOL) of Oryza sativa subsp. japonica (Rice).